The primary structure comprises 248 residues: PF03932 family protein CutC (248 aa).

This sequence belongs to the CutC family.

It is found in the cytoplasm. This is PF03932 family protein CutC from Citrobacter koseri (strain ATCC BAA-895 / CDC 4225-83 / SGSC4696).